The following is a 227-amino-acid chain: Octanoyltransferase (227 aa).

The BPL/LPL catalytic domain maps to 43–218; that stretch reads ADSQDELWIV…TFTKTLGYQE (176 aa). Residues 82–89, 149–151, and 162–164 contribute to the substrate site; these read RGGQVTYH, SLG, and GLA. Cys180 acts as the Acyl-thioester intermediate in catalysis.

The protein belongs to the LipB family.

The protein resides in the cytoplasm. It catalyses the reaction octanoyl-[ACP] + L-lysyl-[protein] = N(6)-octanoyl-L-lysyl-[protein] + holo-[ACP] + H(+). The protein operates within protein modification; protein lipoylation via endogenous pathway; protein N(6)-(lipoyl)lysine from octanoyl-[acyl-carrier-protein]: step 1/2. Its function is as follows. Catalyzes the transfer of endogenously produced octanoic acid from octanoyl-acyl-carrier-protein onto the lipoyl domains of lipoate-dependent enzymes. Lipoyl-ACP can also act as a substrate although octanoyl-ACP is likely to be the physiological substrate. This is Octanoyltransferase from Shewanella denitrificans (strain OS217 / ATCC BAA-1090 / DSM 15013).